The following is a 1408-amino-acid chain: DNA-directed RNA polymerase subunit beta' (1408 aa).

Zn(2+)-binding residues include Cys70, Cys72, Cys85, and Cys88. 3 residues coordinate Mg(2+): Asp460, Asp462, and Asp464. Positions 814, 888, 895, and 898 each coordinate Zn(2+).

It belongs to the RNA polymerase beta' chain family. As to quaternary structure, the RNAP catalytic core consists of 2 alpha, 1 beta, 1 beta' and 1 omega subunit. When a sigma factor is associated with the core the holoenzyme is formed, which can initiate transcription. Mg(2+) is required as a cofactor. It depends on Zn(2+) as a cofactor.

It carries out the reaction RNA(n) + a ribonucleoside 5'-triphosphate = RNA(n+1) + diphosphate. Its function is as follows. DNA-dependent RNA polymerase catalyzes the transcription of DNA into RNA using the four ribonucleoside triphosphates as substrates. This is DNA-directed RNA polymerase subunit beta' from Serratia proteamaculans (strain 568).